Reading from the N-terminus, the 1059-residue chain is Carbamoyl phosphate synthase large chain (1059 aa).

A carboxyphosphate synthetic domain region spans residues 1–401 (MPKRKDIQKV…AMLKAVRSLE (401 aa)). Arg-129, Arg-169, Gly-175, Gly-176, Arg-208, Ile-210, Glu-215, Gly-241, Val-242, His-243, Gln-284, and Glu-298 together coordinate ATP. In terms of domain architecture, ATP-grasp 1 spans 133-327 (KALMERLNEP…IAKMAAKIAV (195 aa)). Mg(2+)-binding residues include Gln-284, Glu-298, and Asn-300. Mn(2+)-binding residues include Gln-284, Glu-298, and Asn-300. The interval 402 to 546 (IGVTGLNDLT…YATYERENES (145 aa)) is oligomerization domain. The interval 547-929 (VRSKKPSVIV…ALYKAFVASN (383 aa)) is carbamoyl phosphate synthetic domain. The ATP-grasp 2 domain occupies 671–861 (DQVIKTLALP…LAQLATRVML (191 aa)). Arg-707, Ser-746, Leu-748, Glu-752, Gly-777, Val-778, His-779, Ser-780, Gln-820, and Glu-832 together coordinate ATP. Gln-820, Glu-832, and Asn-834 together coordinate Mg(2+). Mn(2+)-binding residues include Gln-820, Glu-832, and Asn-834. Residues 930 to 1059 (IKVPQYGNVL…SRSFTVNEMK (130 aa)) form the MGS-like domain. The allosteric domain stretch occupies residues 930–1059 (IKVPQYGNVL…SRSFTVNEMK (130 aa)).

The protein belongs to the CarB family. In terms of assembly, composed of two chains; the small (or glutamine) chain promotes the hydrolysis of glutamine to ammonia, which is used by the large (or ammonia) chain to synthesize carbamoyl phosphate. Tetramer of heterodimers (alpha,beta)4. Requires Mg(2+) as cofactor. Mn(2+) serves as cofactor.

The enzyme catalyses hydrogencarbonate + L-glutamine + 2 ATP + H2O = carbamoyl phosphate + L-glutamate + 2 ADP + phosphate + 2 H(+). It carries out the reaction hydrogencarbonate + NH4(+) + 2 ATP = carbamoyl phosphate + 2 ADP + phosphate + 2 H(+). It functions in the pathway amino-acid biosynthesis; L-arginine biosynthesis; carbamoyl phosphate from bicarbonate: step 1/1. The protein operates within pyrimidine metabolism; UMP biosynthesis via de novo pathway; (S)-dihydroorotate from bicarbonate: step 1/3. In terms of biological role, large subunit of the glutamine-dependent carbamoyl phosphate synthetase (CPSase). CPSase catalyzes the formation of carbamoyl phosphate from the ammonia moiety of glutamine, carbonate, and phosphate donated by ATP, constituting the first step of 2 biosynthetic pathways, one leading to arginine and/or urea and the other to pyrimidine nucleotides. The large subunit (synthetase) binds the substrates ammonia (free or transferred from glutamine from the small subunit), hydrogencarbonate and ATP and carries out an ATP-coupled ligase reaction, activating hydrogencarbonate by forming carboxy phosphate which reacts with ammonia to form carbamoyl phosphate. The chain is Carbamoyl phosphate synthase large chain from Leuconostoc citreum (strain KM20).